Consider the following 477-residue polypeptide: Glutamyl-tRNA(Gln) amidotransferase subunit A (477 aa).

Catalysis depends on charge relay system residues K76 and S151. The Acyl-ester intermediate role is filled by S175.

It belongs to the amidase family. GatA subfamily. As to quaternary structure, heterotrimer of A, B and C subunits.

It carries out the reaction L-glutamyl-tRNA(Gln) + L-glutamine + ATP + H2O = L-glutaminyl-tRNA(Gln) + L-glutamate + ADP + phosphate + H(+). In terms of biological role, allows the formation of correctly charged Gln-tRNA(Gln) through the transamidation of misacylated Glu-tRNA(Gln) in organisms which lack glutaminyl-tRNA synthetase. The reaction takes place in the presence of glutamine and ATP through an activated gamma-phospho-Glu-tRNA(Gln). In Prosthecochloris aestuarii (strain DSM 271 / SK 413), this protein is Glutamyl-tRNA(Gln) amidotransferase subunit A.